A 354-amino-acid chain; its full sequence is S-adenosylmethionine:tRNA ribosyltransferase-isomerase (354 aa).

It belongs to the QueA family. As to quaternary structure, monomer.

It localises to the cytoplasm. It carries out the reaction 7-aminomethyl-7-carbaguanosine(34) in tRNA + S-adenosyl-L-methionine = epoxyqueuosine(34) in tRNA + adenine + L-methionine + 2 H(+). It participates in tRNA modification; tRNA-queuosine biosynthesis. Its function is as follows. Transfers and isomerizes the ribose moiety from AdoMet to the 7-aminomethyl group of 7-deazaguanine (preQ1-tRNA) to give epoxyqueuosine (oQ-tRNA). This chain is S-adenosylmethionine:tRNA ribosyltransferase-isomerase, found in Thermosynechococcus vestitus (strain NIES-2133 / IAM M-273 / BP-1).